We begin with the raw amino-acid sequence, 191 residues long: Cytochrome c biogenesis ATP-binding export protein CcmA (191 aa).

Positions 2–190 (LSLHQLQFKN…SIKSAQILRI (189 aa)) constitute an ABC transporter domain. 29–36 (GANGCGKS) is a binding site for ATP.

Belongs to the ABC transporter superfamily. CcmA exporter (TC 3.A.1.107) family. As to quaternary structure, the complex is composed of two ATP-binding proteins (CcmA) and two transmembrane proteins (CcmB).

It localises to the cell inner membrane. The enzyme catalyses heme b(in) + ATP + H2O = heme b(out) + ADP + phosphate + H(+). Functionally, part of the ABC transporter complex CcmAB involved in the biogenesis of c-type cytochromes; once thought to export heme, this seems not to be the case, but its exact role is uncertain. Responsible for energy coupling to the transport system. The chain is Cytochrome c biogenesis ATP-binding export protein CcmA from Rickettsia conorii (strain ATCC VR-613 / Malish 7).